A 337-amino-acid chain; its full sequence is DNA-directed RNA polymerase subunit alpha (337 aa).

The alpha N-terminal domain (alpha-NTD) stretch occupies residues 1–233 (MVREKVTVST…DLFIPFLHME (233 aa)). An alpha C-terminal domain (alpha-CTD) region spans residues 265 to 337 (KKIALKSIFI…FVIDLAKNKF (73 aa)).

It belongs to the RNA polymerase alpha chain family. As to quaternary structure, in plastids the minimal PEP RNA polymerase catalytic core is composed of four subunits: alpha, beta, beta', and beta''. When a (nuclear-encoded) sigma factor is associated with the core the holoenzyme is formed, which can initiate transcription.

It is found in the plastid. The protein resides in the chloroplast. It catalyses the reaction RNA(n) + a ribonucleoside 5'-triphosphate = RNA(n+1) + diphosphate. Its function is as follows. DNA-dependent RNA polymerase catalyzes the transcription of DNA into RNA using the four ribonucleoside triphosphates as substrates. This is DNA-directed RNA polymerase subunit alpha from Solanum lycopersicum (Tomato).